The sequence spans 536 residues: Membrane protein insertase YidC (536 aa).

Residues 5-25 traverse the membrane as a helical segment; the sequence is ALIAVILSIVFFYGYSALFPP. The interval 30–54 is disordered; it reads APAPSAQQAVTGSQPGAPQASVAAV. The segment covering 31-54 has biased composition (low complexity); the sequence is PAPSAQQAVTGSQPGAPQASVAAV. Transmembrane regions (helical) follow at residues 350 to 370, 420 to 440, 454 to 474, and 494 to 514; these read YGIA…PLTH, LPML…MFSI, LAGK…MVIQ, and PVVF…YWLV.

Belongs to the OXA1/ALB3/YidC family. Type 1 subfamily. As to quaternary structure, interacts with the Sec translocase complex via SecD. Specifically interacts with transmembrane segments of nascent integral membrane proteins during membrane integration.

It localises to the cell inner membrane. Its function is as follows. Required for the insertion and/or proper folding and/or complex formation of integral membrane proteins into the membrane. Involved in integration of membrane proteins that insert both dependently and independently of the Sec translocase complex, as well as at least some lipoproteins. Aids folding of multispanning membrane proteins. The chain is Membrane protein insertase YidC from Geobacter metallireducens (strain ATCC 53774 / DSM 7210 / GS-15).